The sequence spans 207 residues: Ribonuclease HII (207 aa).

Residues 12–201 (DLVAGVDEVG…VRAAWEAREG (190 aa)) form the RNase H type-2 domain. The a divalent metal cation site is built by D18, E19, and D110.

The protein belongs to the RNase HII family. Mn(2+) is required as a cofactor. Requires Mg(2+) as cofactor.

Its subcellular location is the cytoplasm. The enzyme catalyses Endonucleolytic cleavage to 5'-phosphomonoester.. In terms of biological role, endonuclease that specifically degrades the RNA of RNA-DNA hybrids. The sequence is that of Ribonuclease HII from Pseudomonas putida (strain GB-1).